We begin with the raw amino-acid sequence, 321 residues long: Acetyl-coenzyme A carboxylase carboxyl transferase subunit beta, chloroplastic (321 aa).

Residues 47–321 (LWAQCDNCEN…FWFYVLRSSL (275 aa)) form the CoA carboxyltransferase N-terminal domain. The Zn(2+) site is built by Cys51, Cys54, Cys70, and Cys73. A C4-type zinc finger spans residues 51–73 (CDNCENLLYLRFLRENQSVCKEC).

It belongs to the AccD/PCCB family. In terms of assembly, acetyl-CoA carboxylase is a heterohexamer composed of biotin carboxyl carrier protein, biotin carboxylase and 2 subunits each of ACCase subunit alpha and ACCase plastid-coded subunit beta (accD). Zn(2+) serves as cofactor.

It is found in the plastid. The protein resides in the chloroplast stroma. The catalysed reaction is N(6)-carboxybiotinyl-L-lysyl-[protein] + acetyl-CoA = N(6)-biotinyl-L-lysyl-[protein] + malonyl-CoA. The protein operates within lipid metabolism; malonyl-CoA biosynthesis; malonyl-CoA from acetyl-CoA: step 1/1. Its function is as follows. Component of the acetyl coenzyme A carboxylase (ACC) complex. Biotin carboxylase (BC) catalyzes the carboxylation of biotin on its carrier protein (BCCP) and then the CO(2) group is transferred by the transcarboxylase to acetyl-CoA to form malonyl-CoA. This Pinus thunbergii (Japanese black pine) protein is Acetyl-coenzyme A carboxylase carboxyl transferase subunit beta, chloroplastic.